The chain runs to 448 residues: Delta(14)-sterol reductase ERG24 (448 aa).

7 consecutive transmembrane segments (helical) span residues isoleucine 18–leucine 38, cysteine 75–glycine 95, valine 108–alanine 128, isoleucine 157–isoleucine 177, valine 251–leucine 271, methionine 279–valine 299, and asparagine 318–phenylalanine 338. Residues lysine 345, arginine 349, leucine 368, tryptophan 373, and asparagine 380–tyrosine 381 each bind NADP(+). Residues proline 394–isoleucine 414 traverse the membrane as a helical segment. Residues aspartate 420, cysteine 424–tyrosine 428, and tyrosine 435 each bind NADP(+).

It belongs to the ERG4/ERG24 family.

Its subcellular location is the endoplasmic reticulum membrane. The enzyme catalyses 4,4-dimethyl-5alpha-cholesta-8,24-dien-3beta-ol + NADP(+) = 4,4-dimethyl-5alpha-cholesta-8,14,24-trien-3beta-ol + NADPH + H(+). It functions in the pathway steroid biosynthesis; zymosterol biosynthesis; zymosterol from lanosterol: step 2/6. C-14 sterol reductase; part of the third module of ergosterol biosynthesis pathway that includes the late steps of the pathway. ERG24 reduces the C14=C15 double bond of 4,4-dimethyl-cholesta-8,14,24-trienol to produce 4,4-dimethyl-cholesta-8,24-dienol. The third module or late pathway involves the ergosterol synthesis itself through consecutive reactions that mainly occur in the endoplasmic reticulum (ER) membrane. Firstly, the squalene synthase ERG9 catalyzes the condensation of 2 farnesyl pyrophosphate moieties to form squalene, which is the precursor of all steroids. Squalene synthase is crucial for balancing the incorporation of farnesyl diphosphate (FPP) into sterol and nonsterol isoprene synthesis. Secondly, the squalene epoxidase ERG1 catalyzes the stereospecific oxidation of squalene to (S)-2,3-epoxysqualene, which is considered to be a rate-limiting enzyme in steroid biosynthesis. Then, the lanosterol synthase ERG7 catalyzes the cyclization of (S)-2,3 oxidosqualene to lanosterol, a reaction that forms the sterol core. In the next steps, lanosterol is transformed to zymosterol through a complex process involving various demethylation, reduction and desaturation reactions. The lanosterol 14-alpha-demethylase ERG11 (also known as CYP51) catalyzes C14-demethylation of lanosterol to produce 4,4'-dimethyl cholesta-8,14,24-triene-3-beta-ol, which is critical for ergosterol biosynthesis. The C-14 reductase ERG24 reduces the C14=C15 double bond of 4,4-dimethyl-cholesta-8,14,24-trienol to produce 4,4-dimethyl-cholesta-8,24-dienol. 4,4-dimethyl-cholesta-8,24-dienol is substrate of the C-4 demethylation complex ERG25-ERG26-ERG27 in which ERG25 catalyzes the three-step monooxygenation required for the demethylation of 4,4-dimethyl and 4alpha-methylsterols, ERG26 catalyzes the oxidative decarboxylation that results in a reduction of the 3-beta-hydroxy group at the C-3 carbon to an oxo group, and ERG27 is responsible for the reduction of the keto group on the C-3. ERG28 has a role as a scaffold to help anchor ERG25, ERG26 and ERG27 to the endoplasmic reticulum and ERG29 regulates the activity of the iron-containing C4-methylsterol oxidase ERG25. Then, the sterol 24-C-methyltransferase ERG6 catalyzes the methyl transfer from S-adenosyl-methionine to the C-24 of zymosterol to form fecosterol. The C-8 sterol isomerase ERG2 catalyzes the reaction which results in unsaturation at C-7 in the B ring of sterols and thus converts fecosterol to episterol. The sterol-C5-desaturase ERG3 then catalyzes the introduction of a C-5 double bond in the B ring to produce 5-dehydroepisterol. The C-22 sterol desaturase ERG5 further converts 5-dehydroepisterol into ergosta-5,7,22,24(28)-tetraen-3beta-ol by forming the C-22(23) double bond in the sterol side chain. Finally, ergosta-5,7,22,24(28)-tetraen-3beta-ol is substrate of the C-24(28) sterol reductase ERG4 to produce ergosterol. The chain is Delta(14)-sterol reductase ERG24 from Candida albicans (strain SC5314 / ATCC MYA-2876) (Yeast).